The primary structure comprises 319 residues: Ribosomal RNA large subunit methyltransferase F (319 aa).

Residues 1–25 (MAPFFSAMTSKKQSQGLPKGPHPDN) form a disordered region. The span at 7 to 16 (AMTSKKQSQG) shows a compositional bias: polar residues.

This sequence belongs to the methyltransferase superfamily. METTL16/RlmF family.

It is found in the cytoplasm. It catalyses the reaction adenosine(1618) in 23S rRNA + S-adenosyl-L-methionine = N(6)-methyladenosine(1618) in 23S rRNA + S-adenosyl-L-homocysteine + H(+). Specifically methylates the adenine in position 1618 of 23S rRNA. The polypeptide is Ribosomal RNA large subunit methyltransferase F (Shewanella amazonensis (strain ATCC BAA-1098 / SB2B)).